The following is a 162-amino-acid chain: Interleukin-15 (162 aa).

An N-terminal signal peptide occupies residues 1–29 (MRILKPYLRSTSIQCYLCLLLNSHFLTEA). Positions 30–48 (GIHVFILGCISASLPKTEA) are excised as a propeptide. 2 disulfide bridges follow: Cys83/Cys133 and Cys90/Cys136. N-linked (GlcNAc...) asparagine glycans are attached at residues Asn104, Asn113, Asn121, and Asn127.

The protein belongs to the IL-15/IL-21 family.

The protein localises to the secreted. In terms of biological role, cytokine that plays a major role in the development of inflammatory and protective immune responses to microbial invaders and parasites by modulating immune cells of both the innate and adaptive immune systems. Stimulates the proliferation of natural killer cells, T-cells and B-cells and promotes the secretion of several cytokines. In monocytes, induces the production of IL8 and monocyte chemotactic protein 1/CCL2, two chemokines that attract neutrophils and monocytes respectively to sites of infection. Unlike most cytokines, which are secreted in soluble form, IL15 is expressed in association with its high affinity IL15RA on the surface of IL15-producing cells and delivers signals to target cells that express IL2RB and IL2RG receptor subunits. Binding to its receptor triggers the phosphorylation of JAK1 and JAK3 and the recruitment and subsequent phosphorylation of signal transducer and activator of transcription-3/STAT3 and STAT5. In mast cells, induces the rapid tyrosine phosphorylation of STAT6 and thereby controls mast cell survival and release of cytokines such as IL4. The chain is Interleukin-15 (IL15) from Bos taurus (Bovine).